Reading from the N-terminus, the 250-residue chain is Pyridoxine 5'-phosphate synthase (250 aa).

N11 contacts 3-amino-2-oxopropyl phosphate. Residue 13-14 (DH) coordinates 1-deoxy-D-xylulose 5-phosphate. R22 is a binding site for 3-amino-2-oxopropyl phosphate. H47 acts as the Proton acceptor in catalysis. 1-deoxy-D-xylulose 5-phosphate is bound by residues R49 and H54. E74 serves as the catalytic Proton acceptor. Residue T104 coordinates 1-deoxy-D-xylulose 5-phosphate. The active-site Proton donor is H198. Residues G199 and 220–221 (GY) each bind 3-amino-2-oxopropyl phosphate.

The protein belongs to the PNP synthase family. In terms of assembly, homooctamer; tetramer of dimers.

The protein resides in the cytoplasm. The catalysed reaction is 3-amino-2-oxopropyl phosphate + 1-deoxy-D-xylulose 5-phosphate = pyridoxine 5'-phosphate + phosphate + 2 H2O + H(+). The protein operates within cofactor biosynthesis; pyridoxine 5'-phosphate biosynthesis; pyridoxine 5'-phosphate from D-erythrose 4-phosphate: step 5/5. In terms of biological role, catalyzes the complicated ring closure reaction between the two acyclic compounds 1-deoxy-D-xylulose-5-phosphate (DXP) and 3-amino-2-oxopropyl phosphate (1-amino-acetone-3-phosphate or AAP) to form pyridoxine 5'-phosphate (PNP) and inorganic phosphate. The sequence is that of Pyridoxine 5'-phosphate synthase from Bradyrhizobium diazoefficiens (strain JCM 10833 / BCRC 13528 / IAM 13628 / NBRC 14792 / USDA 110).